A 575-amino-acid chain; its full sequence is Acyloxyacyl hydrolase (575 aa).

An N-terminal signal peptide occupies residues 1–25 (MKSPWRILVVSPLLLLPLHSSTSRA). Residues 26 to 34 (HDNQPGTIR) constitute a propeptide that is removed on maturation. In terms of domain architecture, Saposin B-type spans 36-117 (DHYTCVGCVL…HTLEFCKQEP (82 aa)). The interval 37–69 (HYTCVGCVLVVSVIEQLAQVHNSTVQASMERLC) is important for enzyme activity, localization to cytoplasmic vesicles, and protein stability. 8 disulfides stabilise this stretch: Cys40/Cys113, Cys43/Cys107, Cys69/Cys82, Cys122/Cys453, Cys159/Cys168, Cys205/Cys229, Cys248/Cys328, and Cys375/Cys459. Residue Asn58 is glycosylated (N-linked (GlcNAc...) asparagine). The lipopolysaccharide binding stretch occupies residues 172–176 (KLAIK). Ca(2+) is bound by residues Asp183, Asp185, Asp187, Tyr189, Asp204, Asn206, Asp207, Asp209, Val212, Asp222, Asp226, Asn228, Asn230, Ile232, and Glu244. An N-linked (GlcNAc...) asparagine glycan is attached at Asn206. Residue Ser262 is part of the active site. An N-linked (GlcNAc...) asparagine glycan is attached at Asn466.

In terms of assembly, heterodimer of the large and small subunits; disulfide-linked. Ca(2+) serves as cofactor. Cleaved into a large and a small subunit. Post-translationally, the small subunit is N-glycosylated.

Its subcellular location is the secreted. It localises to the cytoplasmic vesicle. The catalysed reaction is a 3-(acyloxy)acyl derivative of bacterial toxin + H2O = a 3-hydroxyacyl derivative of bacterial toxin + a fatty acid + H(+). Functionally, removes the secondary (acyloxyacyl-linked) fatty acyl chains from the lipid A region of bacterial lipopolysaccharides (LPS). By breaking down LPS, terminates the host response to bacterial infection and prevents prolonged and damaging inflammatory responses. In peritoneal macrophages, seems to be important for recovery from a state of immune tolerance following infection by Gram-negative bacteria. This chain is Acyloxyacyl hydrolase, found in Oryctolagus cuniculus (Rabbit).